The sequence spans 248 residues: MAGHSKWANIKHKKAKEDAKRGKIFTKLIREITVAARLGGGDKDANPRLRAAIATALANNMSKDTIERAVVKGAGGDESANVEEVRYEGYGPGGVAIIVDCMTDNRNRTVGEVRHAFTKSGGNLGTDGSVAYMFTKRGIISFAPGVDEDALMEVALEAGAEDIITHEDGSIDVYTDPYDFSDIQEVLIEKGFNSENAEVTFDAETKAELDAETAEKVMALIDKLEDLDDVQSVYSNANFTQELIEQIG.

It belongs to the TACO1 family.

It is found in the cytoplasm. The chain is Probable transcriptional regulatory protein FTN_1028 from Francisella tularensis subsp. novicida (strain U112).